A 331-amino-acid polypeptide reads, in one-letter code: Ketol-acid reductoisomerase (NADP(+)) (331 aa).

Positions 2–181 (IKKYYESDAD…GATRAVVFET (180 aa)) constitute a KARI N-terminal Rossmann domain. NADP(+)-binding positions include 25–28 (YGSQ), R48, S52, and 82–85 (DESQ). Residue H107 is part of the active site. G133 lines the NADP(+) pocket. The 146-residue stretch at 182-327 (TFREETETDL…AEIRGLMPQF (146 aa)) folds into the KARI C-terminal knotted domain. Positions 190, 194, 226, and 230 each coordinate Mg(2+). S251 serves as a coordination point for substrate.

This sequence belongs to the ketol-acid reductoisomerase family. Mg(2+) is required as a cofactor.

The catalysed reaction is (2R)-2,3-dihydroxy-3-methylbutanoate + NADP(+) = (2S)-2-acetolactate + NADPH + H(+). It carries out the reaction (2R,3R)-2,3-dihydroxy-3-methylpentanoate + NADP(+) = (S)-2-ethyl-2-hydroxy-3-oxobutanoate + NADPH + H(+). Its pathway is amino-acid biosynthesis; L-isoleucine biosynthesis; L-isoleucine from 2-oxobutanoate: step 2/4. The protein operates within amino-acid biosynthesis; L-valine biosynthesis; L-valine from pyruvate: step 2/4. Involved in the biosynthesis of branched-chain amino acids (BCAA). Catalyzes an alkyl-migration followed by a ketol-acid reduction of (S)-2-acetolactate (S2AL) to yield (R)-2,3-dihydroxy-isovalerate. In the isomerase reaction, S2AL is rearranged via a Mg-dependent methyl migration to produce 3-hydroxy-3-methyl-2-ketobutyrate (HMKB). In the reductase reaction, this 2-ketoacid undergoes a metal-dependent reduction by NADPH to yield (R)-2,3-dihydroxy-isovalerate. The sequence is that of Ketol-acid reductoisomerase (NADP(+)) from Methanosphaerula palustris (strain ATCC BAA-1556 / DSM 19958 / E1-9c).